We begin with the raw amino-acid sequence, 270 residues long: Small ribosomal subunit protein eS1 (270 aa).

Disordered stretches follow at residues 1 to 21 (MAVG…KKKV) and 238 to 270 (GGGK…QESV).

This sequence belongs to the eukaryotic ribosomal protein eS1 family. As to quaternary structure, component of the small ribosomal subunit. Mature ribosomes consist of a small (40S) and a large (60S) subunit. The 40S subunit contains about 33 different proteins and 1 molecule of RNA (18S). The 60S subunit contains about 49 different proteins and 3 molecules of RNA (28S, 5.8S and 5S).

The protein localises to the cytoplasm. The protein is Small ribosomal subunit protein eS1 of Aedes aegypti (Yellowfever mosquito).